The primary structure comprises 647 residues: ATP-binding protein Uup (647 aa).

2 consecutive ABC transporter domains span residues 1 to 253 and 320 to 546; these read MALI…RVEA and FEME…AKAK. ATP contacts are provided by residues 36 to 43 and 352 to 359; these read GRNGAGKS and GPNGCGKT. The segment covering 545–563 has biased composition (basic and acidic residues); sequence AKKSEPLKEESAVKNDRTS. A disordered region spans residues 545–569; it reads AKKSEPLKEESAVKNDRTSKPKSVK. Residues 559–647 are C-terminal domain (CTD), binds DNA; that stretch reads NDRTSKPKSV…EKKNLVEGKA (89 aa).

The protein belongs to the ABC transporter superfamily. ABCF family. Uup subfamily.

Its subcellular location is the cytoplasm. The enzyme catalyses ATP + H2O = ADP + phosphate + H(+). Probably plays a role in ribosome assembly or function. May be involved in resolution of branched DNA intermediates that result from template switching in postreplication gaps. Binds DNA and has ATPase activity. In Haemophilus influenzae (strain ATCC 51907 / DSM 11121 / KW20 / Rd), this protein is ATP-binding protein Uup.